A 256-amino-acid polypeptide reads, in one-letter code: Tryptophan synthase alpha chain (256 aa).

Catalysis depends on proton acceptor residues Glu-44 and Asp-55.

Belongs to the TrpA family. Tetramer of two alpha and two beta chains.

The enzyme catalyses (1S,2R)-1-C-(indol-3-yl)glycerol 3-phosphate + L-serine = D-glyceraldehyde 3-phosphate + L-tryptophan + H2O. It functions in the pathway amino-acid biosynthesis; L-tryptophan biosynthesis; L-tryptophan from chorismate: step 5/5. Functionally, the alpha subunit is responsible for the aldol cleavage of indoleglycerol phosphate to indole and glyceraldehyde 3-phosphate. This is Tryptophan synthase alpha chain from Coxiella burnetii (strain CbuK_Q154) (Coxiella burnetii (strain Q154)).